The sequence spans 248 residues: Triosephosphate isomerase (248 aa).

The residue at position 4 (Thr4) is a Phosphothreonine. Residues Asn10 and Lys12 each contribute to the substrate site. Ser71 bears the Phosphoserine mark. The Electrophile role is filled by His95. Glu165 serves as the catalytic Proton acceptor. Ser215 bears the Phosphoserine mark. Lys223 participates in a covalent cross-link: Glycyl lysine isopeptide (Lys-Gly) (interchain with G-Cter in ubiquitin).

This sequence belongs to the triosephosphate isomerase family. As to quaternary structure, homodimer.

It catalyses the reaction D-glyceraldehyde 3-phosphate = dihydroxyacetone phosphate. Its pathway is carbohydrate biosynthesis; gluconeogenesis. It participates in carbohydrate degradation; glycolysis; D-glyceraldehyde 3-phosphate from glycerone phosphate: step 1/1. In Saccharomyces cerevisiae (strain ATCC 204508 / S288c) (Baker's yeast), this protein is Triosephosphate isomerase (TPI1).